A 342-amino-acid polypeptide reads, in one-letter code: N-acetyl-gamma-glutamyl-phosphate reductase (342 aa).

The active site involves cysteine 147.

The protein belongs to the NAGSA dehydrogenase family. Type 1 subfamily.

Its subcellular location is the cytoplasm. It carries out the reaction N-acetyl-L-glutamate 5-semialdehyde + phosphate + NADP(+) = N-acetyl-L-glutamyl 5-phosphate + NADPH + H(+). The protein operates within amino-acid biosynthesis; L-arginine biosynthesis; N(2)-acetyl-L-ornithine from L-glutamate: step 3/4. Catalyzes the NADPH-dependent reduction of N-acetyl-5-glutamyl phosphate to yield N-acetyl-L-glutamate 5-semialdehyde. This chain is N-acetyl-gamma-glutamyl-phosphate reductase, found in Campylobacter jejuni subsp. jejuni serotype O:6 (strain 81116 / NCTC 11828).